The chain runs to 343 residues: Anthranilate phosphoribosyltransferase (343 aa).

5-phospho-alpha-D-ribose 1-diphosphate-binding positions include Gly-84, 87-88 (GD), Thr-92, 94-97 (NIST), 112-120 (KHGNRSVSS), and Ser-124. Gly-84 serves as a coordination point for anthranilate. Ser-96 serves as a coordination point for Mg(2+). Residue Asn-115 coordinates anthranilate. Arg-170 provides a ligand contact to anthranilate. Residues Asp-229 and Glu-230 each contribute to the Mg(2+) site.

This sequence belongs to the anthranilate phosphoribosyltransferase family. Homodimer. The cofactor is Mg(2+).

The catalysed reaction is N-(5-phospho-beta-D-ribosyl)anthranilate + diphosphate = 5-phospho-alpha-D-ribose 1-diphosphate + anthranilate. The protein operates within amino-acid biosynthesis; L-tryptophan biosynthesis; L-tryptophan from chorismate: step 2/5. In terms of biological role, catalyzes the transfer of the phosphoribosyl group of 5-phosphorylribose-1-pyrophosphate (PRPP) to anthranilate to yield N-(5'-phosphoribosyl)-anthranilate (PRA). The sequence is that of Anthranilate phosphoribosyltransferase from Stenotrophomonas maltophilia (strain R551-3).